The following is a 244-amino-acid chain: Inactive chemokine-binding protein (244 aa).

The interval 1-79 (MHVPASLQQS…STSVEDVDPP (79 aa)) is disordered. A compositionally biased stretch (polar residues) spans 37 to 53 (QDQTPTNDKICQSVTEI). Residues 54 to 77 (TESESDPDPEVESEDDSTSVEDVD) show a composition bias toward acidic residues.

Belongs to the orthopoxvirus OPG001 family.

The protein localises to the host cytoplasm. In terms of biological role, the protein is truncated in this vaccinal strain and presumably inactive, because the lack of signal peptide prevents the protein of being secreted. In the other strains inhibits host immune defense by binding to host chemokines. Binds host CC chemokines (beta chemokines) such as RANTES with high affinity, but not CXC or C chemokines (alpha and gamma chemokines). This chain is Inactive chemokine-binding protein (OPG001), found in Vaccinia virus (strain Copenhagen) (VACV).